The sequence spans 339 residues: Probable long-chain-alcohol O-fatty-acyltransferase 7 (339 aa).

7 helical membrane passes run 7–27, 39–59, 113–133, 143–163, 226–246, 254–274, and 287–307; these read SLIN…CLPP, IFPV…SIFT, HLST…LYVH, FLLC…LTLL, MLIG…VVFF, TGEV…EVAA, and PVVS…WLFF.

This sequence belongs to the wax synthase family.

Its subcellular location is the membrane. The enzyme catalyses a long chain fatty alcohol + a fatty acyl-CoA = a wax ester + CoA. In terms of biological role, catalyzes the final step in the synthesis of long-chain linear esters (waxes). This Arabidopsis thaliana (Mouse-ear cress) protein is Probable long-chain-alcohol O-fatty-acyltransferase 7 (AT7).